A 338-amino-acid chain; its full sequence is Transcription factor MYB76 (338 aa).

HTH myb-type domains follow at residues 9 to 65 (GEGL…KPDI) and 66 to 116 (KRGE…KKRL). 2 consecutive DNA-binding regions (H-T-H motif) follow at residues 37 to 61 (WRDI…TNYL) and 89 to 112 (WSVI…NTHL). 2 disordered regions span residues 123–171 (PVTH…SSNL) and 176–195 (SKIS…CKKR). Basic and acidic residues predominate over residues 140–154 (MKFDFQKKSNQDEHS). A compositionally biased stretch (low complexity) spans 155-171 (SQSSSTTPASLPLSSNL).

As to quaternary structure, can form complexes with MYC2, MYC3 or MYC4. In terms of tissue distribution, expressed in both vegetative and generative organs. Mostly present in inflorescences, flowers and seedlings, in the transition zone between roots and the foliar part, and stems, and, to a lower extent, in leaves (in midvein and trichomes).

It is found in the nucleus. Plays a role in determining the spatial distribution of aliphatic glucosinolates (AGLSs) within the leaf, mostly short chained. Together with MYB28/HAG1 and MYB29/HAG3, promotes aliphatic glucosinolate biosynthesis and represses indolic glucosinolate biosynthesis, but could not activate AGSL biosynthesis on its own. The polypeptide is Transcription factor MYB76 (MYB76) (Arabidopsis thaliana (Mouse-ear cress)).